The primary structure comprises 507 residues: MVPLLKMTNIVKCFGTVKALDGVNIQLQQGEILSLCGENGSGKSTLMKVLCGIYPHGDFEGEIVFDGQVVEVKTIAETEALGIAIIHQELTLVKELSVLENLFLGAEIETFGVLDFDRMHAEAVKLLKKVKLDVPPDTRVGDLGVGQQQLIEIAKALSKNARLLVLDEPTAPLTESETDILLELVNDLREEGVSCIYISHKLNEVKAISDQICVIRDGQHIGTRDAKSMTTDDIITMMVGREMKQLFPREEHDIGDIVLEVKNISAWSKANSHIRKVDDVSFVLRKGEILGVSGLVGAGRTELMECLFGCYQGRYSGEVYLQGQKLTLQSCHDALDAGIAMVPEDRKRHGIIPIMSVGENITLASLTAFTQSGVLNDVKEASAISESIKALTVKTPNADLAIKHLSGGNQQKAILARFLLVNPTVLILDEPTRGIDVGAKYEIYKLMFQLVKQGISVIMVSSELPEVLGISDRVLVMHEGKIKGDLINDNLSQEQIMDCALSEKVTA.

ABC transporter domains follow at residues 5–242 (LKMT…VGRE) and 259–504 (LEVK…LSEK). Residue 37–44 (GENGSGKS) coordinates ATP.

It belongs to the ABC transporter superfamily. Xylose importer (TC 3.A.1.2.4) family. The complex is composed of two ATP-binding proteins (XylG), two transmembrane proteins (XylH) and a solute-binding protein (XylF).

Its subcellular location is the cell inner membrane. It carries out the reaction D-xylose(out) + ATP + H2O = D-xylose(in) + ADP + phosphate + H(+). Part of the ABC transporter complex XylFGH involved in xylose import. Responsible for energy coupling to the transport system. The sequence is that of Xylose import ATP-binding protein XylG from Photobacterium profundum (strain SS9).